The primary structure comprises 328 residues: NADH-cytochrome b5 reductase-like protein (328 aa).

An FAD-binding FR-type domain is found at 76–184; it reads DKWLEFKLQD…KGPVEKFKYS (109 aa). Threonine 201 is modified (phosphothreonine).

The protein belongs to the flavoprotein pyridine nucleotide cytochrome reductase family. FAD serves as cofactor.

The protein resides in the mitochondrion. It carries out the reaction 2 Fe(III)-[cytochrome b5] + NADH = 2 Fe(II)-[cytochrome b5] + NAD(+) + H(+). Functionally, desaturation and elongation of fatty acids. The protein is NADH-cytochrome b5 reductase-like protein (CBR2) of Arabidopsis thaliana (Mouse-ear cress).